Consider the following 349-residue polypeptide: Ion-translocating oxidoreductase complex subunit D (349 aa).

Transmembrane regions (helical) follow at residues 20–40 (IMFL…YFFG), 42–62 (GVLI…IIIL), 83–105 (VLLG…CFFA), and 120–140 (IFNP…VHMT). An FMN phosphoryl threonine modification is found at T184. The next 5 membrane-spanning stretches (helical) occupy residues 212–232 (IVSI…CFLL), 236–256 (VICW…SSIT), 263–283 (FFCS…AFFI), 291–311 (SCTK…VWII), and 319–339 (DGIA…DAYL).

This sequence belongs to the NqrB/RnfD family. In terms of assembly, the complex is composed of six subunits: RnfA, RnfB, RnfC, RnfD, RnfE and RnfG. It depends on FMN as a cofactor.

Its subcellular location is the cell inner membrane. Functionally, part of a membrane-bound complex that couples electron transfer with translocation of ions across the membrane. This is Ion-translocating oxidoreductase complex subunit D from Buchnera aphidicola subsp. Schizaphis graminum (strain Sg).